Consider the following 370-residue polypeptide: Quinolinate synthase (370 aa).

The iminosuccinate site is built by histidine 62 and serine 83. Position 128 (cysteine 128) interacts with [4Fe-4S] cluster. Iminosuccinate contacts are provided by residues 154–156 (YAN) and serine 171. Cysteine 215 provides a ligand contact to [4Fe-4S] cluster. Residues 241–243 (HPE) and threonine 258 contribute to the iminosuccinate site. Cysteine 312 provides a ligand contact to [4Fe-4S] cluster.

The protein belongs to the quinolinate synthase family. Type 1 subfamily. The cofactor is [4Fe-4S] cluster.

Its subcellular location is the cytoplasm. It carries out the reaction iminosuccinate + dihydroxyacetone phosphate = quinolinate + phosphate + 2 H2O + H(+). It functions in the pathway cofactor biosynthesis; NAD(+) biosynthesis; quinolinate from iminoaspartate: step 1/1. Catalyzes the condensation of iminoaspartate with dihydroxyacetone phosphate to form quinolinate. This Neisseria meningitidis serogroup C / serotype 2a (strain ATCC 700532 / DSM 15464 / FAM18) protein is Quinolinate synthase.